The primary structure comprises 326 residues: Type II secretion system protein K (326 aa).

Residues 1 to 7 (MNHRQRG) constitute a propeptide, leader sequence. The chain crosses the membrane as a helical span at residues 8 to 28 (IALLMVLLILALMMVLASAMT). The Periplasmic segment spans residues 29-326 (ERSARMYQQT…RYGIYWVADE (298 aa)).

Belongs to the GSP K family. As to quaternary structure, type II secretion is composed of four main components: the outer membrane complex, the inner membrane complex, the cytoplasmic secretion ATPase and the periplasm-spanning pseudopilus. Interacts with core component PulG. Post-translationally, cleaved by prepilin peptidase.

The protein resides in the cell inner membrane. Its function is as follows. Component of the type II secretion system required for the energy-dependent secretion of extracellular factors such as proteases and toxins from the periplasm. Plays a role in pseudopilus assembly and seems to control its length. Interacts with the pseudopilus tip complex that is critical for the recognition and binding of secretion substrates. In Klebsiella pneumoniae, this protein is Type II secretion system protein K (pulK).